The sequence spans 187 residues: Large ribosomal subunit protein uL5 (187 aa).

This sequence belongs to the universal ribosomal protein uL5 family. Part of the 50S ribosomal subunit; part of the 5S rRNA/L5/L18/L25 subcomplex. Contacts the 5S rRNA and the P site tRNA. Forms a bridge to the 30S subunit in the 70S ribosome.

This is one of the proteins that bind and probably mediate the attachment of the 5S RNA into the large ribosomal subunit, where it forms part of the central protuberance. In the 70S ribosome it contacts protein S13 of the 30S subunit (bridge B1b), connecting the 2 subunits; this bridge is implicated in subunit movement. Contacts the P site tRNA; the 5S rRNA and some of its associated proteins might help stabilize positioning of ribosome-bound tRNAs. The chain is Large ribosomal subunit protein uL5 from Saccharopolyspora erythraea (strain ATCC 11635 / DSM 40517 / JCM 4748 / NBRC 13426 / NCIMB 8594 / NRRL 2338).